We begin with the raw amino-acid sequence, 433 residues long: Trigger factor (433 aa).

One can recognise a PPIase FKBP-type domain in the interval 161–246 (EDRVVIDFVG…LKKVENIVLP (86 aa)).

This sequence belongs to the FKBP-type PPIase family. Tig subfamily.

The protein localises to the cytoplasm. The enzyme catalyses [protein]-peptidylproline (omega=180) = [protein]-peptidylproline (omega=0). Functionally, involved in protein export. Acts as a chaperone by maintaining the newly synthesized protein in an open conformation. Functions as a peptidyl-prolyl cis-trans isomerase. The chain is Trigger factor from Actinobacillus pleuropneumoniae serotype 7 (strain AP76).